The primary structure comprises 386 residues: Chorismate synthase (386 aa).

Positions 32–60 are disordered; the sequence is LPLSEDDVQRELDRRRPGQSGVSTPRSER. Over residues 38–47 the composition is skewed to basic and acidic residues; sequence DVQRELDRRR. Residue arginine 46 participates in NADP(+) binding. Residues 123–125, glycine 290, 305–309, and arginine 332 contribute to the FMN site; these read RAS and KPTPS.

This sequence belongs to the chorismate synthase family. FMNH2 serves as cofactor.

It carries out the reaction 5-O-(1-carboxyvinyl)-3-phosphoshikimate = chorismate + phosphate. It functions in the pathway metabolic intermediate biosynthesis; chorismate biosynthesis; chorismate from D-erythrose 4-phosphate and phosphoenolpyruvate: step 7/7. Catalyzes the anti-1,4-elimination of the C-3 phosphate and the C-6 proR hydrogen from 5-enolpyruvylshikimate-3-phosphate (EPSP) to yield chorismate, which is the branch point compound that serves as the starting substrate for the three terminal pathways of aromatic amino acid biosynthesis. This reaction introduces a second double bond into the aromatic ring system. This is Chorismate synthase from Methanopyrus kandleri (strain AV19 / DSM 6324 / JCM 9639 / NBRC 100938).